Reading from the N-terminus, the 539-residue chain is GMP synthase [glutamine-hydrolyzing] (539 aa).

The Glutamine amidotransferase type-1 domain occupies 4 to 202 (KILILDFGSQ…VLDIAGAKPD (199 aa)). Residue C81 is the Nucleophile of the active site. Residues H176 and E178 contribute to the active site. Residues 203-395 (WIMRDHIEEA…LGLPAEMVYR (193 aa)) enclose the GMPS ATP-PPase domain. Residue 230-236 (SGGVDSS) participates in ATP binding.

As to quaternary structure, homodimer.

It carries out the reaction XMP + L-glutamine + ATP + H2O = GMP + L-glutamate + AMP + diphosphate + 2 H(+). Its pathway is purine metabolism; GMP biosynthesis; GMP from XMP (L-Gln route): step 1/1. Functionally, catalyzes the synthesis of GMP from XMP. This Burkholderia pseudomallei (strain 1106a) protein is GMP synthase [glutamine-hydrolyzing].